We begin with the raw amino-acid sequence, 500 residues long: Gamma-glutamylanilide synthase (500 aa).

The GS beta-grasp domain occupies 32–136 (LGLEMIRLSW…MLADLHWKSG (105 aa)). One can recognise a GS catalytic domain in the interval 143–500 (PRGIMKKAVK…WEQKEYFNLL (358 aa)).

This sequence belongs to the glutamine synthetase family. As to quaternary structure, homohexamer.

The enzyme catalyses aniline + L-glutamate + ATP = N(5)-phenyl-L-glutamine + ADP + phosphate. Functionally, involved in the initial oxidation of aniline to catechol by the release of its amino group. Catalyzes the ATP-dependent ligation of L-glutamate to aniline to yield gamma-glutamylanilide (gamma-GA). AtdA1 has a broad substrate range and is able to convert the following anilines, including chlorinated and methylated forms of aniline: aniline (100%), o-chloroaniline (92%), m-chloroaniline (69%), p-chloroaniline (92%), o-methylaniline (40%), m-methylaniline (27%) and p-methylaniline (45%). The sequence is that of Gamma-glutamylanilide synthase from Acinetobacter sp.